Consider the following 102-residue polypeptide: UPF0328 protein ECU10_1820 (102 aa).

This sequence belongs to the UPF0328 family.

This chain is UPF0328 protein ECU10_1820, found in Encephalitozoon cuniculi (strain GB-M1) (Microsporidian parasite).